The primary structure comprises 184 residues: Threonylcarbamoyl-AMP synthase (184 aa).

Residues 3 to 184 enclose the YrdC-like domain; it reads AWFIQKAVSV…DAATGAILRQ (182 aa).

The protein belongs to the SUA5 family. TsaC subfamily.

Its subcellular location is the cytoplasm. The catalysed reaction is L-threonine + hydrogencarbonate + ATP = L-threonylcarbamoyladenylate + diphosphate + H2O. Required for the formation of a threonylcarbamoyl group on adenosine at position 37 (t(6)A37) in tRNAs that read codons beginning with adenine. Catalyzes the conversion of L-threonine, HCO(3)(-)/CO(2) and ATP to give threonylcarbamoyl-AMP (TC-AMP) as the acyladenylate intermediate, with the release of diphosphate. In Hahella chejuensis (strain KCTC 2396), this protein is Threonylcarbamoyl-AMP synthase.